The primary structure comprises 623 residues: Endoglucanase 12 (623 aa).

Residues 1 to 73 (MYSANHWGGS…LGCVVVKRKL (73 aa)) lie on the Cytoplasmic side of the membrane. A helical; Signal-anchor for type II membrane protein transmembrane segment spans residues 74-94 (LWWVLWTLLAAFILIGLPVII). At 95-623 (AKSIPKKKPH…TPPPPSKWKP (529 aa)) the chain is on the extracellular side. The active-site Nucleophile is Asp-166. N-linked (GlcNAc...) asparagine glycosylation is found at Asn-217, Asn-236, Asn-324, Asn-345, Asn-408, and Asn-425. Catalysis depends on residues His-513, Asp-561, and Glu-570.

This sequence belongs to the glycosyl hydrolase 9 (cellulase E) family. As to expression, ubiquitous.

The protein resides in the membrane. It carries out the reaction Endohydrolysis of (1-&gt;4)-beta-D-glucosidic linkages in cellulose, lichenin and cereal beta-D-glucans.. The polypeptide is Endoglucanase 12 (GLU3) (Oryza sativa subsp. japonica (Rice)).